We begin with the raw amino-acid sequence, 664 residues long: Transketolase 1 (664 aa).

Histidine 26 lines the substrate pocket. Residues histidine 66 and 114–116 contribute to the thiamine diphosphate site; that span reads GPL. Aspartate 155 is a Mg(2+) binding site. Residues glycine 156 and asparagine 185 each contribute to the thiamine diphosphate site. Mg(2+)-binding residues include asparagine 185 and isoleucine 187. The substrate site is built by histidine 260, arginine 357, and serine 384. Histidine 260 provides a ligand contact to thiamine diphosphate. Glutamate 411 serves as the catalytic Proton donor. Phenylalanine 437 contacts thiamine diphosphate. 3 residues coordinate substrate: histidine 461, aspartate 469, and arginine 520.

This sequence belongs to the transketolase family. As to quaternary structure, homodimer. Mg(2+) is required as a cofactor. Ca(2+) serves as cofactor. Requires Mn(2+) as cofactor. It depends on Co(2+) as a cofactor. The cofactor is thiamine diphosphate.

The catalysed reaction is D-sedoheptulose 7-phosphate + D-glyceraldehyde 3-phosphate = aldehydo-D-ribose 5-phosphate + D-xylulose 5-phosphate. Functionally, catalyzes the transfer of a two-carbon ketol group from a ketose donor to an aldose acceptor, via a covalent intermediate with the cofactor thiamine pyrophosphate. The protein is Transketolase 1 (tkt1) of Vibrio vulnificus (strain CMCP6).